Here is a 997-residue protein sequence, read N- to C-terminus: Autophagy-related protein 9 (997 aa).

The Cytoplasmic portion of the chain corresponds to 1–318 (MERDEYQLPN…DVYNYYLGNG (318 aa)). A Phosphoserine modification is found at Ser-19. Over residues 29–39 (VNPSLNSQEMS) the composition is skewed to polar residues. The disordered stretch occupies residues 29 to 88 (VNPSLNSQEMSNFPLPDIERGSSLLHSTNDSREDVDENDLRVPESDQGTSTEEEDEVDEE). A compositionally biased stretch (acidic residues) spans 79–88 (TEEEDEVDEE). Glycyl lysine isopeptide (Lys-Gly) (interchain with G-Cter in ubiquitin) cross-links involve residues Lys-113 and Lys-121. Ser-122 is modified (phosphoserine). Disordered stretches follow at residues 127-159 (LVEGSTDDSVPKVGQLSSEEEEDNEFINNDGFD) and 214-234 (HHDKDKSANNGPRNINGNQKH). Lys-138 is covalently cross-linked (Glycyl lysine isopeptide (Lys-Gly) (interchain with G-Cter in ubiquitin)). 2 positions are modified to phosphoserine: Ser-143 and Ser-144. Residues 144–159 (SEEEEDNEFINNDGFD) are compositionally biased toward acidic residues. Residues 221–233 (ANNGPRNINGNQK) are compositionally biased toward polar residues. The chain crosses the membrane as a helical span at residues 319 to 339 (FYCIILEKILNICTLLFVVFV). Residues 340 to 376 (STYMGHCVDYSKLPTSHRVSDIIIDKCYSNSITGFTK) lie on the Lumenal side of the membrane. The helical transmembrane segment at 377-397 (FFLWMFYFFVILKIVQLYFDV) threads the bilayer. The Cytoplasmic segment spans residues 398–538 (QKLSELQNFY…EELQKRFMLA (141 aa)). An intramembrane segment occupies 539 to 559 (GFLNIILAPFLVTYFVLLYFF). At 560–620 (RYFNEYKTSP…DQFPKEKTNL (61 aa)) the chain is on the cytoplasmic side. Residues 621–641 (FLKFVSFICGSFVAILAFLTV) form a helical membrane-spanning segment. At 642–656 (FDPENFLNFEITSDR) the chain is on the lumenal side. A Phosphoserine modification is found at Ser-657. A helical membrane pass occupies residues 657–677 (SVIFYITILGAIWSVSRNTIT). The Cytoplasmic segment spans residues 678–723 (QEYHVFDPEETLKELYEYTHYLPKEWEGRYHKEEIKLEFCKLYNLR). Lys-701 participates in a covalent cross-link: Glycyl lysine isopeptide (Lys-Gly) (interchain with G-Cter in ubiquitin). An intramembrane segment occupies 724–744 (IVILLRELTSLMITPFVLWFS). Residues 745–997 (LPSSAGRIVD…EYYKKSDVGR (253 aa)) are Cytoplasmic-facing. 2 positions are modified to phosphoserine: Ser-787 and Ser-792. A Phosphothreonine modification is found at Thr-794. Ser-802 is modified (phosphoserine). Position 804 is a phosphothreonine (Thr-804). Ser-831, Ser-842, Ser-864, Ser-948, and Ser-969 each carry phosphoserine.

The protein belongs to the ATG9 family. As to quaternary structure, homotrimer; forms a homotrimer with a central pore that forms a path between the two membrane leaflets. Interacts with ATG23 and ATG27 to form a cycling complex for trafficking to the PAS. Interacts (via N-terminus) with ATG11, required for recruitment of ATG9 to the PAS for the Cvt pathway during nutrient-rich conditions. Interacts (via N-terminus) with ATG17; required for recruitment to the PAS during autophagy and starved conditions. Interacts with ATG2 and ATG18; required for the retrieval of ATG9 from the PAS to the cytoplasmic pool. Interacts with ATG41. Interacts with the conserved oligomeric Golgi (COG) complex subunits COG3 and COG4. Interacts with TRS85. In terms of processing, phosphorylated by ATG1; phosphorylation is required for autophagy and cytoplasm to vacuole transport (Cvt) vesicle formation. Phosphorylation by ATG1 regulates ATG18 interaction and preautophagosome elongation. Phosphorylation at Ser-122 is required for selective autophagy by regulating anterograde trafficking and interaction with ATG23 and ATG27. Phosphorylation at Ser-122 prevents ubiquitination by the SCF(MET30) complex. Ubiquitinated by the SCF(MET30) complex in normal conditions, leading to its degradation by the proteasome, thereby preventing inappropriate induction of autophagy. Ubiquitination by the SCF(MET30) complex is prevented by phosphorylation at Ser-122.

It localises to the preautophagosomal structure membrane. Its subcellular location is the cytoplasmic vesicle membrane. The protein resides in the golgi apparatus membrane. The protein localises to the endoplasmic reticulum membrane. It is found in the mitochondrion membrane. It carries out the reaction a 1,2-diacyl-sn-glycero-3-phosphocholine(in) = a 1,2-diacyl-sn-glycero-3-phosphocholine(out). It catalyses the reaction a 1,2-diacyl-sn-glycero-3-phospho-L-serine(in) = a 1,2-diacyl-sn-glycero-3-phospho-L-serine(out). The enzyme catalyses a 1,2-diacyl-sn-glycero-3-phosphoethanolamine(in) = a 1,2-diacyl-sn-glycero-3-phosphoethanolamine(out). The catalysed reaction is a 1,2-diacyl-sn-glycero-3-phospho-(1D-myo-inositol-3-phosphate)(in) = a 1,2-diacyl-sn-glycero-3-phospho-(1D-myo-inositol-3-phosphate)(out). Its function is as follows. Phospholipid scramblase involved in autophagy and cytoplasm to vacuole transport (Cvt) vesicle formation. Cycles between the preautophagosomal structure/phagophore assembly site (PAS) and the cytoplasmic vesicle pool and supplies membrane for the growing autophagosome. Lipid scramblase activity plays a key role in preautophagosomal structure/phagophore assembly by distributing the phospholipids that arrive through ATG2 from the cytoplasmic to the luminal leaflet of the bilayer, thereby driving autophagosomal membrane expansion. Required for mitophagy. Also involved in endoplasmic reticulum-specific autophagic process and is essential for the survival of cells subjected to severe ER stress. Different machineries are required for anterograde trafficking to the PAS during either the Cvt pathway or bulk autophagy and for retrograde trafficking. Recruits vesicle-tethering proteins TRS85 and YPT1 to the autophagosome formation site. Also recruits ATG23 and ATG8 to the PAS. The chain is Autophagy-related protein 9 from Saccharomyces cerevisiae (strain YJM789) (Baker's yeast).